The chain runs to 434 residues: Protein TolB homolog (434 aa).

Positions 1–27 (MRSTRNSFACLCIMLFGMLFVPFTLRA) are cleaved as a signal peptide. The segment at 413–434 (SNQRPLLNMQGEQQQPSWSVSK) is disordered.

It belongs to the TolB family.

It localises to the periplasm. The polypeptide is Protein TolB homolog (Chlorobaculum tepidum (strain ATCC 49652 / DSM 12025 / NBRC 103806 / TLS) (Chlorobium tepidum)).